A 186-amino-acid chain; its full sequence is Coiled-coil domain-containing protein ORF13 (186 aa).

Coiled-coil stretches lie at residues 2 to 30 (GIKE…DFIK) and 63 to 85 (LREK…QRDK).

This is Coiled-coil domain-containing protein ORF13 from Helicobacter pylori (strain 35A).